The chain runs to 301 residues: Probable alpha-L-glutamate ligase (301 aa).

Residues leucine 104–glutamate 287 form the ATP-grasp domain. Residues lysine 141, glutamate 178–phenylalanine 179, aspartate 187, and arginine 211–asparagine 213 each bind ATP. 3 residues coordinate Mg(2+): aspartate 248, glutamate 260, and asparagine 262. The Mn(2+) site is built by aspartate 248, glutamate 260, and asparagine 262.

Belongs to the RimK family. Mg(2+) serves as cofactor. Mn(2+) is required as a cofactor.

This is Probable alpha-L-glutamate ligase from Maridesulfovibrio salexigens (strain ATCC 14822 / DSM 2638 / NCIMB 8403 / VKM B-1763) (Desulfovibrio salexigens).